The following is a 103-amino-acid chain: G0/G1 switch protein 2 (103 aa).

In terms of assembly, directly interacts with BCL2; this interaction prevents the formation of the anti-apoptotic BAX-BCL2 complex.

The protein localises to the mitochondrion. In terms of biological role, promotes apoptosis by binding to BCL2, hence preventing the formation of protective BCL2-BAX heterodimers. This is G0/G1 switch protein 2 (G0s2) from Rattus norvegicus (Rat).